Here is a 340-residue protein sequence, read N- to C-terminus: Ketol-acid reductoisomerase (NADP(+)) (340 aa).

One can recognise a KARI N-terminal Rossmann domain in the interval 2–182 (AELYYDNQAD…GCTRAGVLRT (181 aa)). NADP(+)-binding positions include 25-28 (FGSQ), S51, S53, and 83-86 (DIGQ). H108 is an active-site residue. G134 lines the NADP(+) pocket. A KARI C-terminal knotted domain is found at 183–328 (TFAEETETDL…RELRRMMPFV (146 aa)). Mg(2+) is bound by residues D191, E195, E227, and E231. S252 is a binding site for substrate.

Belongs to the ketol-acid reductoisomerase family. The cofactor is Mg(2+).

The catalysed reaction is (2R)-2,3-dihydroxy-3-methylbutanoate + NADP(+) = (2S)-2-acetolactate + NADPH + H(+). It carries out the reaction (2R,3R)-2,3-dihydroxy-3-methylpentanoate + NADP(+) = (S)-2-ethyl-2-hydroxy-3-oxobutanoate + NADPH + H(+). The protein operates within amino-acid biosynthesis; L-isoleucine biosynthesis; L-isoleucine from 2-oxobutanoate: step 2/4. It functions in the pathway amino-acid biosynthesis; L-valine biosynthesis; L-valine from pyruvate: step 2/4. In terms of biological role, involved in the biosynthesis of branched-chain amino acids (BCAA). Catalyzes an alkyl-migration followed by a ketol-acid reduction of (S)-2-acetolactate (S2AL) to yield (R)-2,3-dihydroxy-isovalerate. In the isomerase reaction, S2AL is rearranged via a Mg-dependent methyl migration to produce 3-hydroxy-3-methyl-2-ketobutyrate (HMKB). In the reductase reaction, this 2-ketoacid undergoes a metal-dependent reduction by NADPH to yield (R)-2,3-dihydroxy-isovalerate. This is Ketol-acid reductoisomerase (NADP(+)) from Chloroflexus aurantiacus (strain ATCC 29366 / DSM 635 / J-10-fl).